A 792-amino-acid chain; its full sequence is MKEELKREYERIKDRISPEEFEELIEKKKEELGDIGFMDDLTIASTVVDDILKEKNTMLSEKPEHRMDTISKLEEGAETPVTGRVMKISSPRTFTTRKGREGKLANVIIADDTGELRAVFWTENIKLLKKFREGDVIRIKDVNIRGGFGGRKEAHLMPRSTVEVLDPEDYPEFPEYREEITPIGDLVEDDEVNVIARITGVSRVRTFERDGREGRFISLDIMDATGSTTYTLWNNDVNLVEELGLKEGDAVKILWAQPRRRDDKVTLTHTSLTRVVPGEYDVPEFREELVKIGDLHEMRNVTVMGLVTKVNDPVEFERNDGTTGSVKSIEIADDTGSARVTLWDEDTRIKINKGDIIRISGANVEFDDFNQSYRINTNFNTRITLNPESDGALLKVLEEYREQMRPMKISEILEMEDEGEEVDVVGRIFSLSDPREFEREDGTGIVRSMELADETGKIRISLWDEKAEKPMNIGDAVRIENARIRLGLYSVELSAGRTTRIVNPLPEDMEDLPSFEELEEMLYQTKKIADLEEDDRNIRIIARVVDLFEPREFQRGDGTPGLVRTAEFADDTGSIRASLWDDAAEKPLSIGDPVKIENPRVVFRDDMGGGRLELSIGNSSRIEPASERDLEGLPSFDELQEMLYPHRDIADLDEDSRNVLIEGELIEMSGRRILSIKCPSCNERLDLSDENICNFCGELVDEPRYLLMIPGRIMDDTGEVMITFFGREAESILEMTTDEVVNIINQSADESALEERVEDLNGVTVRVIGNADMDVYSEELRFIPRKVVKKEL.

4 consecutive DNA-binding regions (OB) follow at residues 81–140 (VTGR…IRIK), 192–273 (VNVI…TSLT), 301–365 (VTVM…ANVE), and 422–494 (VDVV…VELS). The C4-type zinc finger occupies 678-696 (CPSCNERLDLSDENICNFC).

As to quaternary structure, probably binds DNA polymerase PolB. Binds helicase Hel308, in presence and absence of DNA.

In terms of biological role, inhibits DNA polymerase activity of PolB, which can be overcome by RFC and PNCA. Stimulates 3'-to 5'-exonuclease activity of PolB at 30 degrees Celsius, but has no effect at 50 or 70 degrees Celsius. Bind ssDNA and replication forks; replication forks structures bind both Hel308 and this protein. Has no effect on helicase activity of Hel308; may help target the helicase to DNA substrates that require DNA re-modeling. This is Replication factor A (rpa) from Methanothermobacter thermautotrophicus (strain ATCC 29096 / DSM 1053 / JCM 10044 / NBRC 100330 / Delta H) (Methanobacterium thermoautotrophicum).